Here is a 715-residue protein sequence, read N- to C-terminus: Elongation factor G (715 aa).

The 283-residue stretch at Asn-8–Thr-290 folds into the tr-type G domain. GTP is bound by residues Ala-17 to Thr-24, Asp-88 to His-92, and Asn-142 to Asp-145.

The protein belongs to the TRAFAC class translation factor GTPase superfamily. Classic translation factor GTPase family. EF-G/EF-2 subfamily.

The protein localises to the cytoplasm. Catalyzes the GTP-dependent ribosomal translocation step during translation elongation. During this step, the ribosome changes from the pre-translocational (PRE) to the post-translocational (POST) state as the newly formed A-site-bound peptidyl-tRNA and P-site-bound deacylated tRNA move to the P and E sites, respectively. Catalyzes the coordinated movement of the two tRNA molecules, the mRNA and conformational changes in the ribosome. The protein is Elongation factor G of Ectopseudomonas mendocina (strain ymp) (Pseudomonas mendocina).